A 153-amino-acid chain; its full sequence is Endoribonuclease YbeY (153 aa).

Zn(2+) contacts are provided by histidine 113, histidine 117, and histidine 123.

This sequence belongs to the endoribonuclease YbeY family. The cofactor is Zn(2+).

The protein resides in the cytoplasm. Its function is as follows. Single strand-specific metallo-endoribonuclease involved in late-stage 70S ribosome quality control and in maturation of the 3' terminus of the 16S rRNA. The chain is Endoribonuclease YbeY from Aliivibrio fischeri (strain MJ11) (Vibrio fischeri).